Reading from the N-terminus, the 185-residue chain is Ribosome-recycling factor (185 aa).

Belongs to the RRF family.

Its subcellular location is the cytoplasm. Responsible for the release of ribosomes from messenger RNA at the termination of protein biosynthesis. May increase the efficiency of translation by recycling ribosomes from one round of translation to another. The polypeptide is Ribosome-recycling factor (Kineococcus radiotolerans (strain ATCC BAA-149 / DSM 14245 / SRS30216)).